Consider the following 696-residue polypeptide: Junctophilin-2 (696 aa).

Residues 1–674 (MSGGRFDFDD…EVEVEEVPNT (674 aa)) are Cytoplasmic-facing. MORN repeat units follow at residues 14 to 36 (YCGG…KGQG), 38 to 59 (YSGS…SGNT), 60 to 79 (FEGY…TKGR), 82 to 104 (YKGE…NSGA), 106 to 128 (YEGT…DGGT), and 129 to 151 (YQGQ…PYGM). Residues S162 and S165 each carry the phosphoserine modification. Disordered regions lie at residues 164–192 (SSLR…SPPV) and 246–273 (LSSG…AAPF). 2 MORN repeats span residues 285 to 307 (YMGE…SGLR) and 308 to 330 (YEGE…DGHR). A Bipartite nuclear localization signal motif is present at residues 345–359 (KRRVLPLKSSKVRQK). The tract at residues 439 to 664 (NSESLLEPPE…RKEVAQAKEA (226 aa)) is disordered. A phosphoserine mark is found at S440, S442, and S462. Over residues 457-471 (ERPRESPQLHERETP) the composition is skewed to basic and acidic residues. Residue T470 is modified to Phosphothreonine. Residues 474 to 487 (EGGPPSPAGTPPQP) are compositionally biased toward pro residues. S479 is subject to Phosphoserine. T483 is modified (phosphothreonine). The short motif at 488–492 (KRPRP) is the Nuclear localization signal element. A phosphoserine mark is found at S527 and S533. Residues 573 to 585 (PLEDEQEPEPEPE) show a composition bias toward acidic residues. 3 positions are modified to phosphoserine: S593, S597, and S613. The span at 631–644 (AEPKAKARKTEARG) shows a compositional bias: basic and acidic residues. A helical; Anchor for type IV membrane protein transmembrane segment spans residues 675-695 (VLICMVILLNIGLAILFVHLL).

Belongs to the junctophilin family. As to quaternary structure, interacts with TRPC3. Interacts with BAG5 and HSPA8; the interaction with HSPA8 is increased in the presence of BAG5. Interacts with MEF2C. In terms of processing, proteolytically cleaved by calpain in response to cardiac stress. The major cleavage site takes place at the C-terminus and leads to the release of the Junctophilin-2 N-terminal fragment chain (JP2NT). Phosphorylation on Ser-165, probably by PKC, affects RYR1-mediated calcium ion release, interaction with TRPC3, and skeletal muscle myotubule development. As to expression, abundantly expressed in skeletal muscle and heart. Weak expression in stomach and lung.

It is found in the cell membrane. The protein localises to the sarcoplasmic reticulum membrane. It localises to the endoplasmic reticulum membrane. Its subcellular location is the nucleus. Membrane-binding protein that provides a structural bridge between the plasma membrane and the sarcoplasmic reticulum and is required for normal excitation-contraction coupling in cardiomyocytes. Provides a structural foundation for functional cross-talk between the cell surface and intracellular Ca(2+) release channels by maintaining the 12-15 nm gap between the sarcolemma and the sarcoplasmic reticulum membranes in the cardiac dyads. Necessary for proper intracellular Ca(2+) signaling in cardiac myocytes via its involvement in ryanodine receptor-mediated calcium ion release. Contributes to the construction of skeletal muscle triad junctions. In terms of biological role, transcription repressor required to safeguard against the deleterious effects of cardiac stress. Generated following cleavage of the Junctophilin-2 chain by calpain in response to cardiac stress in cardiomyocytes. Following cleavage and release from the membrane, translocates to the nucleus, binds DNA and represses expression of genes implicated in cell growth and differentiation, hypertrophy, inflammation and fibrosis. Modifies the transcription profile and thereby attenuates pathological remodeling in response to cardiac stress. Probably acts by competing with MEF2 transcription factors and TATA-binding proteins. The sequence is that of Junctophilin-2 from Mus musculus (Mouse).